A 208-amino-acid chain; its full sequence is Imidazole glycerol phosphate synthase subunit HisH (208 aa).

Residues 1-206 enclose the Glutamine amidotransferase type-1 domain; that stretch reads MIVIVDYDTG…KEMTEDEALS (206 aa). The active-site Nucleophile is C79. Residues H181 and E183 contribute to the active site.

Heterodimer of HisH and HisF.

The protein localises to the cytoplasm. It carries out the reaction 5-[(5-phospho-1-deoxy-D-ribulos-1-ylimino)methylamino]-1-(5-phospho-beta-D-ribosyl)imidazole-4-carboxamide + L-glutamine = D-erythro-1-(imidazol-4-yl)glycerol 3-phosphate + 5-amino-1-(5-phospho-beta-D-ribosyl)imidazole-4-carboxamide + L-glutamate + H(+). It catalyses the reaction L-glutamine + H2O = L-glutamate + NH4(+). It participates in amino-acid biosynthesis; L-histidine biosynthesis; L-histidine from 5-phospho-alpha-D-ribose 1-diphosphate: step 5/9. IGPS catalyzes the conversion of PRFAR and glutamine to IGP, AICAR and glutamate. The HisH subunit catalyzes the hydrolysis of glutamine to glutamate and ammonia as part of the synthesis of IGP and AICAR. The resulting ammonia molecule is channeled to the active site of HisF. The protein is Imidazole glycerol phosphate synthase subunit HisH of Lacticaseibacillus casei (strain BL23) (Lactobacillus casei).